The primary structure comprises 263 residues: 3-methyl-2-oxobutanoate hydroxymethyltransferase (263 aa).

Mg(2+) contacts are provided by aspartate 43 and aspartate 82. Residues 43 to 44 (DS), aspartate 82, and lysine 111 each bind 3-methyl-2-oxobutanoate. A Mg(2+)-binding site is contributed by glutamate 113. Glutamate 180 serves as the catalytic Proton acceptor.

The protein belongs to the PanB family. As to quaternary structure, homodecamer; pentamer of dimers. It depends on Mg(2+) as a cofactor.

It localises to the cytoplasm. The catalysed reaction is 3-methyl-2-oxobutanoate + (6R)-5,10-methylene-5,6,7,8-tetrahydrofolate + H2O = 2-dehydropantoate + (6S)-5,6,7,8-tetrahydrofolate. It participates in cofactor biosynthesis; (R)-pantothenate biosynthesis; (R)-pantoate from 3-methyl-2-oxobutanoate: step 1/2. Functionally, catalyzes the reversible reaction in which hydroxymethyl group from 5,10-methylenetetrahydrofolate is transferred onto alpha-ketoisovalerate to form ketopantoate. The chain is 3-methyl-2-oxobutanoate hydroxymethyltransferase from Bdellovibrio bacteriovorus (strain ATCC 15356 / DSM 50701 / NCIMB 9529 / HD100).